We begin with the raw amino-acid sequence, 384 residues long: S-adenosylmethionine synthase (384 aa).

His-15 contacts ATP. Position 17 (Asp-17) interacts with Mg(2+). Glu-43 lines the K(+) pocket. L-methionine contacts are provided by Glu-56 and Gln-99. The tract at residues 99 to 109 (QSPDINQGVDR) is flexible loop. Residues 164 to 166 (DAK), 230 to 231 (RF), Asp-239, 245 to 246 (RK), Ala-262, and Lys-266 each bind ATP. Asp-239 contributes to the L-methionine binding site. Lys-270 is an L-methionine binding site.

It belongs to the AdoMet synthase family. Homotetramer; dimer of dimers. Mg(2+) is required as a cofactor. K(+) serves as cofactor.

It is found in the cytoplasm. It carries out the reaction L-methionine + ATP + H2O = S-adenosyl-L-methionine + phosphate + diphosphate. The protein operates within amino-acid biosynthesis; S-adenosyl-L-methionine biosynthesis; S-adenosyl-L-methionine from L-methionine: step 1/1. Catalyzes the formation of S-adenosylmethionine (AdoMet) from methionine and ATP. The overall synthetic reaction is composed of two sequential steps, AdoMet formation and the subsequent tripolyphosphate hydrolysis which occurs prior to release of AdoMet from the enzyme. In Yersinia pseudotuberculosis serotype IB (strain PB1/+), this protein is S-adenosylmethionine synthase.